The primary structure comprises 267 residues: MRSSLTPLGPPVSRDRVIASFPKWYTPEACLQLREHFHGQVSAACQRRNTGTVGLKLSKVVVVGDLYVGKTSLIHRFCKNVFDRDYKATIGVDFEIERFEIAGIPYSLQIWDTAGQEKFKCIASAYYRGAQVIITAFDLTDVQTLEHTRQWLEDALRENEAGSCFIFLVGTKKDLLSGAACEQAEADAVHLAREMQAEYWSVSAKTGENVKAFFSRVAALAFEQSVLQDLERQSSARLQVGNGDLIQMEGSPPETQESKRPSSLGCC.

The GTP site is built by valine 68, glycine 69, lysine 70, threonine 71, serine 72, aspartate 83, tyrosine 86, and threonine 89. Threonine 71 is a binding site for Mg(2+). The short motif at 76 to 94 (RFCKNVFDRDYKATIGVDF) is the Switch 1 element. 2 residues coordinate Mg(2+): threonine 89 and aspartate 112. The Switch 2 signature appears at 113–132 (TAGQEKFKCIASAYYRGAQV). 6 residues coordinate GTP: glycine 115, lysine 172, aspartate 174, serine 203, alanine 204, and lysine 205. The disordered stretch occupies residues 243–267 (GDLIQMEGSPPETQESKRPSSLGCC). S-geranylgeranyl cysteine attachment occurs at residues cysteine 266 and cysteine 267.

Belongs to the small GTPase superfamily. Rab family. It depends on Mg(2+) as a cofactor. In terms of tissue distribution, ubiquitously present in all tissues examined.

It localises to the golgi apparatus membrane. It catalyses the reaction GTP + H2O = GDP + phosphate + H(+). Its activity is regulated as follows. Regulated by guanine nucleotide exchange factors (GEFs) which promote the exchange of bound GDP for free GTP. Regulated by GTPase activating proteins (GAPs) which increase the GTP hydrolysis activity. Inhibited by GDP dissociation inhibitors (GDIs). The small GTPases Rab are key regulators of intracellular membrane trafficking, from the formation of transport vesicles to their fusion with membranes. Rabs cycle between an inactive GDP-bound form and an active GTP-bound form that is able to recruit to membranes different sets of downstream effectors directly responsible for vesicle formation, movement, tethering and fusion. This Homo sapiens (Human) protein is Ras-related protein Rab-36.